A 285-amino-acid chain; its full sequence is UDP-3-O-acyl-N-acetylglucosamine deacetylase (285 aa).

Residues His89, His243, and Asp247 each contribute to the Zn(2+) site. Residue His270 is the Proton donor of the active site.

The protein belongs to the LpxC family. Zn(2+) is required as a cofactor.

The catalysed reaction is a UDP-3-O-[(3R)-3-hydroxyacyl]-N-acetyl-alpha-D-glucosamine + H2O = a UDP-3-O-[(3R)-3-hydroxyacyl]-alpha-D-glucosamine + acetate. The protein operates within glycolipid biosynthesis; lipid IV(A) biosynthesis; lipid IV(A) from (3R)-3-hydroxytetradecanoyl-[acyl-carrier-protein] and UDP-N-acetyl-alpha-D-glucosamine: step 2/6. Functionally, catalyzes the hydrolysis of UDP-3-O-myristoyl-N-acetylglucosamine to form UDP-3-O-myristoylglucosamine and acetate, the committed step in lipid A biosynthesis. This is UDP-3-O-acyl-N-acetylglucosamine deacetylase from Thermosynechococcus vestitus (strain NIES-2133 / IAM M-273 / BP-1).